The chain runs to 115 residues: NADH-ubiquinone oxidoreductase chain 3 (115 aa).

The next 3 membrane-spanning stretches (helical) occupy residues 4 to 24 (ALTLFTNTALASLLVLIAFWL), 55 to 75 (FFLVAITFLLFDLEIALLLPL), and 84 to 104 (LTTMLTMALLLISLLAASLAY).

This sequence belongs to the complex I subunit 3 family. In terms of assembly, core subunit of respiratory chain NADH dehydrogenase (Complex I) which is composed of 45 different subunits. Interacts with TMEM186. Interacts with TMEM242.

It localises to the mitochondrion inner membrane. The catalysed reaction is a ubiquinone + NADH + 5 H(+)(in) = a ubiquinol + NAD(+) + 4 H(+)(out). Functionally, core subunit of the mitochondrial membrane respiratory chain NADH dehydrogenase (Complex I) which catalyzes electron transfer from NADH through the respiratory chain, using ubiquinone as an electron acceptor. Essential for the catalytic activity of complex I. The sequence is that of NADH-ubiquinone oxidoreductase chain 3 from Phoca vitulina (Harbor seal).